The chain runs to 198 residues: Thioredoxin reductase-like selenoprotein T homolog CG3887 (198 aa).

A signal peptide spans M1–A25. Cysteines 49 and 52 form a disulfide.

The protein belongs to the SelWTH family. SELT subfamily.

The catalysed reaction is [thioredoxin]-dithiol + NADP(+) = [thioredoxin]-disulfide + NADPH + H(+). Its function is as follows. Probably has thioredoxin reductase-like oxidoreductase activity. The protein is Thioredoxin reductase-like selenoprotein T homolog CG3887 of Drosophila melanogaster (Fruit fly).